Here is a 388-residue protein sequence, read N- to C-terminus: Purple acid phosphatase 19 (388 aa).

The signal sequence occupies residues Met1 to Ala24. Residues Asn97 and Asn111 are each glycosylated (N-linked (GlcNAc...) asparagine). Fe cation is bound by residues Asp145 and Tyr148. Residue Asp145 participates in Zn(2+) binding. Asn182 contacts Zn(2+). Asn182 is a binding site for substrate. The N-linked (GlcNAc...) asparagine glycan is linked to Asn226. His238 is a Zn(2+) binding site. His248 acts as the Proton donor in catalysis. A Zn(2+)-binding site is contributed by His275. His275–His277 is a binding site for substrate. Position 277 (His277) interacts with Fe cation. N-linked (GlcNAc...) asparagine glycans are attached at residues Asn291 and Asn348.

Belongs to the metallophosphoesterase superfamily. Purple acid phosphatase family. Homodimer. Requires Fe cation as cofactor. Zn(2+) is required as a cofactor. In terms of tissue distribution, specifically expressed in flowers.

It is found in the secreted. It carries out the reaction a phosphate monoester + H2O = an alcohol + phosphate. In Arabidopsis thaliana (Mouse-ear cress), this protein is Purple acid phosphatase 19 (PAP19).